Consider the following 62-residue polypeptide: Sperm protamine P1 (62 aa).

The interval 1-62 is disordered; that stretch reads MARYRHSRSR…RYSRRGRRRY (62 aa).

It belongs to the protamine P1 family. In terms of tissue distribution, testis.

The protein resides in the nucleus. It localises to the chromosome. In terms of biological role, protamines substitute for histones in the chromatin of sperm during the haploid phase of spermatogenesis. They compact sperm DNA into a highly condensed, stable and inactive complex. The protein is Sperm protamine P1 (PRM1) of Trichosurus vulpecula (Brush-tailed possum).